A 207-amino-acid chain; its full sequence is Thiamine-phosphate synthase (207 aa).

4-amino-2-methyl-5-(diphosphooxymethyl)pyrimidine is bound by residues 36-40 and Asn-68; that span reads QLRMK. The Mg(2+) site is built by Asp-69 and Asp-88. Residue Ser-106 coordinates 4-amino-2-methyl-5-(diphosphooxymethyl)pyrimidine. Residue 132 to 134 coordinates 2-[(2R,5Z)-2-carboxy-4-methylthiazol-5(2H)-ylidene]ethyl phosphate; the sequence is TNT. Residue Lys-135 coordinates 4-amino-2-methyl-5-(diphosphooxymethyl)pyrimidine. 2-[(2R,5Z)-2-carboxy-4-methylthiazol-5(2H)-ylidene]ethyl phosphate contacts are provided by residues Gly-162 and 182–183; that span reads VS.

The protein belongs to the thiamine-phosphate synthase family. Requires Mg(2+) as cofactor.

It catalyses the reaction 2-[(2R,5Z)-2-carboxy-4-methylthiazol-5(2H)-ylidene]ethyl phosphate + 4-amino-2-methyl-5-(diphosphooxymethyl)pyrimidine + 2 H(+) = thiamine phosphate + CO2 + diphosphate. It carries out the reaction 2-(2-carboxy-4-methylthiazol-5-yl)ethyl phosphate + 4-amino-2-methyl-5-(diphosphooxymethyl)pyrimidine + 2 H(+) = thiamine phosphate + CO2 + diphosphate. The catalysed reaction is 4-methyl-5-(2-phosphooxyethyl)-thiazole + 4-amino-2-methyl-5-(diphosphooxymethyl)pyrimidine + H(+) = thiamine phosphate + diphosphate. It functions in the pathway cofactor biosynthesis; thiamine diphosphate biosynthesis; thiamine phosphate from 4-amino-2-methyl-5-diphosphomethylpyrimidine and 4-methyl-5-(2-phosphoethyl)-thiazole: step 1/1. Condenses 4-methyl-5-(beta-hydroxyethyl)thiazole monophosphate (THZ-P) and 2-methyl-4-amino-5-hydroxymethyl pyrimidine pyrophosphate (HMP-PP) to form thiamine monophosphate (TMP). This chain is Thiamine-phosphate synthase, found in Methanococcus maripaludis (strain C5 / ATCC BAA-1333).